We begin with the raw amino-acid sequence, 476 residues long: Ribosomal protein uS12 methylthiotransferase RimO (476 aa).

An MTTase N-terminal domain is found at 7-123; it reads KSLYMMTLGC…IGDLLAAEAS (117 aa). [4Fe-4S] cluster contacts are provided by C16, C52, C86, C158, C162, and C165. The region spanning 144–373 is the Radical SAM core domain; that stretch reads SMPKYTAYLK…MAIQKRINRE (230 aa). Residues 376 to 444 enclose the TRAM domain; sequence KKLVGKRLEV…DYDLVARVVE (69 aa). The segment covering 445-459 has biased composition (basic and acidic residues); the sequence is RPDPKQREHTARDAH. The interval 445–476 is disordered; the sequence is RPDPKQREHTARDAHPAPLPVAAMQRPAPRAE.

Belongs to the methylthiotransferase family. RimO subfamily. [4Fe-4S] cluster is required as a cofactor.

It localises to the cytoplasm. It catalyses the reaction L-aspartate(89)-[ribosomal protein uS12]-hydrogen + (sulfur carrier)-SH + AH2 + 2 S-adenosyl-L-methionine = 3-methylsulfanyl-L-aspartate(89)-[ribosomal protein uS12]-hydrogen + (sulfur carrier)-H + 5'-deoxyadenosine + L-methionine + A + S-adenosyl-L-homocysteine + 2 H(+). Catalyzes the methylthiolation of an aspartic acid residue of ribosomal protein uS12. The protein is Ribosomal protein uS12 methylthiotransferase RimO of Myxococcus xanthus (strain DK1622).